The following is a 235-amino-acid chain: Ubiquinone/menaquinone biosynthesis C-methyltransferase UbiE (235 aa).

Residues Thr60, Asp80, 106 to 107 (DV), and Ser123 contribute to the S-adenosyl-L-methionine site.

This sequence belongs to the class I-like SAM-binding methyltransferase superfamily. MenG/UbiE family.

The catalysed reaction is a 2-demethylmenaquinol + S-adenosyl-L-methionine = a menaquinol + S-adenosyl-L-homocysteine + H(+). It catalyses the reaction a 2-methoxy-6-(all-trans-polyprenyl)benzene-1,4-diol + S-adenosyl-L-methionine = a 5-methoxy-2-methyl-3-(all-trans-polyprenyl)benzene-1,4-diol + S-adenosyl-L-homocysteine + H(+). Its pathway is quinol/quinone metabolism; menaquinone biosynthesis; menaquinol from 1,4-dihydroxy-2-naphthoate: step 2/2. The protein operates within cofactor biosynthesis; ubiquinone biosynthesis. In terms of biological role, methyltransferase required for the conversion of demethylmenaquinol (DMKH2) to menaquinol (MKH2) and the conversion of 2-polyprenyl-6-methoxy-1,4-benzoquinol (DDMQH2) to 2-polyprenyl-3-methyl-6-methoxy-1,4-benzoquinol (DMQH2). This Bdellovibrio bacteriovorus (strain ATCC 15356 / DSM 50701 / NCIMB 9529 / HD100) protein is Ubiquinone/menaquinone biosynthesis C-methyltransferase UbiE.